We begin with the raw amino-acid sequence, 238 residues long: Uridylate kinase (238 aa).

Residue Lys-12–Gly-15 participates in ATP binding. UMP is bound at residue Gly-54. Residues Gly-55 and Arg-59 each contribute to the ATP site. UMP is bound by residues Asp-74 and Val-135–Thr-142. Positions 162, 168, and 171 each coordinate ATP.

It belongs to the UMP kinase family. Homohexamer.

The protein resides in the cytoplasm. The enzyme catalyses UMP + ATP = UDP + ADP. Its pathway is pyrimidine metabolism; CTP biosynthesis via de novo pathway; UDP from UMP (UMPK route): step 1/1. With respect to regulation, inhibited by UTP. In terms of biological role, catalyzes the reversible phosphorylation of UMP to UDP. The sequence is that of Uridylate kinase from Erythrobacter litoralis (strain HTCC2594).